Reading from the N-terminus, the 74-residue chain is Omwaprin-b (74 aa).

The N-terminal stretch at 1–24 (MSSGGLLLLLGLLTLWEVLTPVSS) is a signal peptide. A WAP domain is found at 27–71 (RPKKPGLCPPRPQKPCVKECKNDWSCPGQQKCCNYGCIDECRDPI). Cystine bridges form between Cys34–Cys59, Cys42–Cys63, Cys46–Cys58, and Cys52–Cys67.

Belongs to the venom waprin family. In terms of tissue distribution, expressed by the venom gland.

It localises to the secreted. Damages membranes of susceptible bacteria. Has antibacterial activity against the Gram-positive bacteria B.megaterium and S.warneri. After 45 minutes of treatment with this protein, B.megaterium have no visible pili and are smooth. Has no antibacterial activity against the Gram-positive bacteria B.thuringiensis, S.aureus, S.clavuligerus and B. anthracis, or the Gram-negative bacteria E.coli and A.tumefaciens. Has no hemolytic activity. Does not inhibit the proteinases elastase and cathepsin G. Is not toxic to mice. The sequence is that of Omwaprin-b from Oxyuranus microlepidotus (Inland taipan).